We begin with the raw amino-acid sequence, 237 residues long: 2-C-methyl-D-erythritol 4-phosphate cytidylyltransferase (237 aa).

The protein belongs to the IspD/TarI cytidylyltransferase family. IspD subfamily. Homodimer.

It catalyses the reaction 2-C-methyl-D-erythritol 4-phosphate + CTP + H(+) = 4-CDP-2-C-methyl-D-erythritol + diphosphate. It participates in isoprenoid biosynthesis; isopentenyl diphosphate biosynthesis via DXP pathway; isopentenyl diphosphate from 1-deoxy-D-xylulose 5-phosphate: step 2/6. Functionally, catalyzes the formation of 4-diphosphocytidyl-2-C-methyl-D-erythritol from CTP and 2-C-methyl-D-erythritol 4-phosphate (MEP). The protein is 2-C-methyl-D-erythritol 4-phosphate cytidylyltransferase of Pectobacterium atrosepticum (strain SCRI 1043 / ATCC BAA-672) (Erwinia carotovora subsp. atroseptica).